Reading from the N-terminus, the 104-residue chain is Large ribosomal subunit protein uL23 (104 aa).

The protein belongs to the universal ribosomal protein uL23 family. Part of the 50S ribosomal subunit. Contacts protein L29, and trigger factor when it is bound to the ribosome.

One of the early assembly proteins it binds 23S rRNA. One of the proteins that surrounds the polypeptide exit tunnel on the outside of the ribosome. Forms the main docking site for trigger factor binding to the ribosome. This is Large ribosomal subunit protein uL23 from Trichormus variabilis (strain ATCC 29413 / PCC 7937) (Anabaena variabilis).